A 379-amino-acid polypeptide reads, in one-letter code: tRNA-specific 2-thiouridylase MnmA (379 aa).

Residues 9-16 (AMSGGVDS) and Met35 contribute to the ATP site. Positions 94 to 96 (NPD) are interaction with target base in tRNA. Cys99 (nucleophile) is an active-site residue. Residues Cys99 and Cys195 are joined by a disulfide bond. Gly123 serves as a coordination point for ATP. Positions 145 to 147 (KDQ) are interaction with tRNA. Cys195 functions as the Cysteine persulfide intermediate in the catalytic mechanism. Positions 307 to 308 (RY) are interaction with tRNA.

This sequence belongs to the MnmA/TRMU family.

The protein resides in the cytoplasm. The catalysed reaction is S-sulfanyl-L-cysteinyl-[protein] + uridine(34) in tRNA + AH2 + ATP = 2-thiouridine(34) in tRNA + L-cysteinyl-[protein] + A + AMP + diphosphate + H(+). Catalyzes the 2-thiolation of uridine at the wobble position (U34) of tRNA, leading to the formation of s(2)U34. The chain is tRNA-specific 2-thiouridylase MnmA from Xylella fastidiosa (strain M12).